The primary structure comprises 398 residues: Acetate kinase (398 aa).

Mg(2+) is bound at residue asparagine 7. Lysine 14 lines the ATP pocket. Arginine 91 is a binding site for substrate. Aspartate 148 functions as the Proton donor/acceptor in the catalytic mechanism. Residues 208–212, 283–285, and 331–335 contribute to the ATP site; these read HIGNG, DMR, and GVGEN. Residue glutamate 385 participates in Mg(2+) binding.

Belongs to the acetokinase family. As to quaternary structure, homodimer. It depends on Mg(2+) as a cofactor. The cofactor is Mn(2+).

It is found in the cytoplasm. It carries out the reaction acetate + ATP = acetyl phosphate + ADP. The protein operates within metabolic intermediate biosynthesis; acetyl-CoA biosynthesis; acetyl-CoA from acetate: step 1/2. Functionally, catalyzes the formation of acetyl phosphate from acetate and ATP. Can also catalyze the reverse reaction. The protein is Acetate kinase of Porphyromonas gingivalis (strain ATCC BAA-308 / W83).